Here is a 609-residue protein sequence, read N- to C-terminus: UvrABC system protein C (609 aa).

One can recognise a GIY-YIG domain in the interval 16–94 (SSAGVYRMYD…IKQYMPRYNV (79 aa)). One can recognise a UVR domain in the interval 203–238 (QQVIATLVGKMEQAAMDLNYEDAARYRDQISALRRV).

The protein belongs to the UvrC family. In terms of assembly, interacts with UvrB in an incision complex.

It localises to the cytoplasm. Functionally, the UvrABC repair system catalyzes the recognition and processing of DNA lesions. UvrC both incises the 5' and 3' sides of the lesion. The N-terminal half is responsible for the 3' incision and the C-terminal half is responsible for the 5' incision. This Shewanella loihica (strain ATCC BAA-1088 / PV-4) protein is UvrABC system protein C.